The chain runs to 154 residues: 6,7-dimethyl-8-ribityllumazine synthase (154 aa).

Residues Phe-15, 47–49 (TFD), and 71–73 (AVI) contribute to the 5-amino-6-(D-ribitylamino)uracil site. 76 to 77 (ET) provides a ligand contact to (2S)-2-hydroxy-3-oxobutyl phosphate. The active-site Proton donor is the His-79. Leu-104 contributes to the 5-amino-6-(D-ribitylamino)uracil binding site. Residue Arg-119 participates in (2S)-2-hydroxy-3-oxobutyl phosphate binding.

The protein belongs to the DMRL synthase family.

The catalysed reaction is (2S)-2-hydroxy-3-oxobutyl phosphate + 5-amino-6-(D-ribitylamino)uracil = 6,7-dimethyl-8-(1-D-ribityl)lumazine + phosphate + 2 H2O + H(+). The protein operates within cofactor biosynthesis; riboflavin biosynthesis; riboflavin from 2-hydroxy-3-oxobutyl phosphate and 5-amino-6-(D-ribitylamino)uracil: step 1/2. Catalyzes the formation of 6,7-dimethyl-8-ribityllumazine by condensation of 5-amino-6-(D-ribitylamino)uracil with 3,4-dihydroxy-2-butanone 4-phosphate. This is the penultimate step in the biosynthesis of riboflavin. This chain is 6,7-dimethyl-8-ribityllumazine synthase, found in Saccharolobus islandicus (strain M.16.27) (Sulfolobus islandicus).